Here is a 177-residue protein sequence, read N- to C-terminus: Putative pre-16S rRNA nuclease (177 aa).

The disordered stretch occupies residues 1-20 (MVATQQGPDRPGIDDPGRGR).

The protein belongs to the YqgF nuclease family.

It is found in the cytoplasm. Functionally, could be a nuclease involved in processing of the 5'-end of pre-16S rRNA. The protein is Putative pre-16S rRNA nuclease of Rhodococcus erythropolis (strain PR4 / NBRC 100887).